The primary structure comprises 320 residues: Carbonic anhydrase 6 (320 aa).

A signal peptide spans methionine 1–alanine 17. In terms of domain architecture, Alpha-carbonic anhydrase spans serine 21–phenylalanine 278. A disulfide bridge connects residues cysteine 42 and cysteine 224. Residue histidine 85 is the Proton donor/acceptor of the active site. Residues histidine 111, histidine 113, and histidine 138 each coordinate Zn(2+). Substrate is bound at residue threonine 220–threonine 221. Asparagine 256 carries an N-linked (GlcNAc...) asparagine glycan.

Belongs to the alpha-carbonic anhydrase family. Zn(2+) is required as a cofactor.

It localises to the secreted. It catalyses the reaction hydrogencarbonate + H(+) = CO2 + H2O. Its function is as follows. Reversible hydration of carbon dioxide. Its role in saliva is unknown. The protein is Carbonic anhydrase 6 (CA6) of Canis lupus familiaris (Dog).